A 487-amino-acid polypeptide reads, in one-letter code: Malonate-semialdehyde dehydrogenase (487 aa).

Residues A150, F152, K176, E179, R180, S229, and T251 each coordinate NAD(+). C284 acts as the Nucleophile in catalysis. Residue E382 coordinates NAD(+).

It belongs to the aldehyde dehydrogenase family. IolA subfamily. Homotetramer.

The enzyme catalyses 3-oxopropanoate + NAD(+) + CoA + H2O = hydrogencarbonate + acetyl-CoA + NADH + H(+). It catalyses the reaction 2-methyl-3-oxopropanoate + NAD(+) + CoA + H2O = propanoyl-CoA + hydrogencarbonate + NADH + H(+). The protein operates within polyol metabolism; myo-inositol degradation into acetyl-CoA; acetyl-CoA from myo-inositol: step 7/7. Its function is as follows. Catalyzes the oxidation of malonate semialdehyde (MSA) and methylmalonate semialdehyde (MMSA) into acetyl-CoA and propanoyl-CoA, respectively. Is involved in a myo-inositol catabolic pathway. Bicarbonate, and not CO2, is the end-product of the enzymatic reaction. The polypeptide is Malonate-semialdehyde dehydrogenase (Bacillus velezensis (strain DSM 23117 / BGSC 10A6 / LMG 26770 / FZB42) (Bacillus amyloliquefaciens subsp. plantarum)).